The chain runs to 540 residues: Cytochrome P450 monooxygenase CYP3 (540 aa).

An N-linked (GlcNAc...) asparagine glycan is attached at N2. Residues 26 to 46 (IFGLSSSTLVVLVAMIAVSTL) traverse the membrane as a helical segment. 3 N-linked (GlcNAc...) asparagine glycosylation sites follow: N100, N210, and N400. C471 contributes to the heme binding site.

The protein belongs to the cytochrome P450 family. Requires heme as cofactor.

The protein localises to the membrane. Its pathway is secondary metabolite biosynthesis. Cytochrome P450 monooxygenase; part of the gene cluster that mediates the biosynthesis of itaconic acid and 2-hydroxyparaconate. Cis-aconitate is secreted by the mitochondrial tricarboxylate transporter MTT1. In the cytosol cis-aconitate is converted into trans-aconitate via isomerization by the aconitate-delta-isomerase ADI1. Decarboxylation of trans-aconitate by the trans-aconitate decarboxylase TAD1 then leads then to the production of itaconic acid. The cytochrome P450 monooxygenase CYP3 further converts itaconate to 2-hydroxyparaconate via oxidation of the double bond, leading to a transient epoxide, which can subsequently be lactonized to produce 2-hydroxyparaconate. Secretion of itaconate and possibly 2-hydroxyparaconate into the medium is mediated by the major facilitator ITP1. The glyoxalase domain-containing protein RDO1 is not involved in the biosynthesis of itaconate and 2-hydroxyparaconate, however, it might play a role in the further conversion of 2-hydroxyparaconate to itatartarate. The chain is Cytochrome P450 monooxygenase CYP3 from Mycosarcoma maydis (Corn smut fungus).